A 417-amino-acid chain; its full sequence is Serine--tRNA ligase (417 aa).

232–234 (TAE) contributes to the L-serine binding site. 263 to 265 (RKE) contributes to the ATP binding site. Glu286 provides a ligand contact to L-serine. Residue 350–353 (EISS) coordinates ATP. Ser385 provides a ligand contact to L-serine.

It belongs to the class-II aminoacyl-tRNA synthetase family. Type-1 seryl-tRNA synthetase subfamily. In terms of assembly, homodimer. The tRNA molecule binds across the dimer.

The protein localises to the cytoplasm. It carries out the reaction tRNA(Ser) + L-serine + ATP = L-seryl-tRNA(Ser) + AMP + diphosphate + H(+). The catalysed reaction is tRNA(Sec) + L-serine + ATP = L-seryl-tRNA(Sec) + AMP + diphosphate + H(+). It functions in the pathway aminoacyl-tRNA biosynthesis; selenocysteinyl-tRNA(Sec) biosynthesis; L-seryl-tRNA(Sec) from L-serine and tRNA(Sec): step 1/1. Its function is as follows. Catalyzes the attachment of serine to tRNA(Ser). Is also able to aminoacylate tRNA(Sec) with serine, to form the misacylated tRNA L-seryl-tRNA(Sec), which will be further converted into selenocysteinyl-tRNA(Sec). This is Serine--tRNA ligase from Sulfurihydrogenibium sp. (strain YO3AOP1).